A 135-amino-acid polypeptide reads, in one-letter code: Putative large ribosomal subunit protein eL32' (135 aa).

It belongs to the eukaryotic ribosomal protein eL32 family.

This is Putative large ribosomal subunit protein eL32' (Rpl32-ps) from Mus musculus (Mouse).